Reading from the N-terminus, the 833-residue chain is Protein translocase subunit SecA (833 aa).

ATP contacts are provided by residues Gln-87, 105-109 (GEGKT), and Asp-494. The disordered stretch occupies residues 789 to 816 (PAAVAYSGGEAEAGPAQPHREDPKVGRN). The segment covering 806-815 (PHREDPKVGR) has biased composition (basic and acidic residues). Positions 819, 821, 830, and 831 each coordinate Zn(2+).

This sequence belongs to the SecA family. In terms of assembly, monomer and homodimer. Part of the essential Sec protein translocation apparatus which comprises SecA, SecYEG and auxiliary proteins SecDF-YajC and YidC. Zn(2+) is required as a cofactor.

Its subcellular location is the cell inner membrane. It localises to the cytoplasm. It carries out the reaction ATP + H2O + cellular proteinSide 1 = ADP + phosphate + cellular proteinSide 2.. In terms of biological role, part of the Sec protein translocase complex. Interacts with the SecYEG preprotein conducting channel. Has a central role in coupling the hydrolysis of ATP to the transfer of proteins into and across the cell membrane, serving as an ATP-driven molecular motor driving the stepwise translocation of polypeptide chains across the membrane. The polypeptide is Protein translocase subunit SecA (Nitratidesulfovibrio vulgaris (strain ATCC 29579 / DSM 644 / CCUG 34227 / NCIMB 8303 / VKM B-1760 / Hildenborough) (Desulfovibrio vulgaris)).